The following is a 110-amino-acid chain: uncharacterized protein (110 aa).

In terms of biological role, may play a regulatory role in sulfomenaquinone (SMK) biosynthesis. This is an uncharacterized protein from Mycobacterium bovis (strain ATCC BAA-935 / AF2122/97).